We begin with the raw amino-acid sequence, 384 residues long: Cell division protein FtsZ (384 aa).

GTP-binding positions include 20 to 24, 107 to 109, E138, R142, and N186; these read GGGSN and GTG.

Belongs to the FtsZ family. As to quaternary structure, homodimer. Polymerizes to form a dynamic ring structure in a strictly GTP-dependent manner. Interacts directly with several other division proteins.

It is found in the cytoplasm. Functionally, essential cell division protein that forms a contractile ring structure (Z ring) at the future cell division site. The regulation of the ring assembly controls the timing and the location of cell division. One of the functions of the FtsZ ring is to recruit other cell division proteins to the septum to produce a new cell wall between the dividing cells. Binds GTP and shows GTPase activity. In Buchnera aphidicola subsp. Acyrthosiphon pisum (strain APS) (Acyrthosiphon pisum symbiotic bacterium), this protein is Cell division protein FtsZ.